A 167-amino-acid chain; its full sequence is 6,7-dimethyl-8-ribityllumazine synthase (167 aa).

5-amino-6-(D-ribitylamino)uracil contacts are provided by residues F26, 60–62 (AFE), and 89–91 (AII). 94 to 95 (ET) lines the (2S)-2-hydroxy-3-oxobutyl phosphate pocket. H97 functions as the Proton donor in the catalytic mechanism. F122 lines the 5-amino-6-(D-ribitylamino)uracil pocket. Residue R136 coordinates (2S)-2-hydroxy-3-oxobutyl phosphate.

It belongs to the DMRL synthase family. As to quaternary structure, forms an icosahedral capsid composed of 60 subunits, arranged as a dodecamer of pentamers.

The enzyme catalyses (2S)-2-hydroxy-3-oxobutyl phosphate + 5-amino-6-(D-ribitylamino)uracil = 6,7-dimethyl-8-(1-D-ribityl)lumazine + phosphate + 2 H2O + H(+). Its pathway is cofactor biosynthesis; riboflavin biosynthesis; riboflavin from 2-hydroxy-3-oxobutyl phosphate and 5-amino-6-(D-ribitylamino)uracil: step 1/2. In terms of biological role, catalyzes the formation of 6,7-dimethyl-8-ribityllumazine by condensation of 5-amino-6-(D-ribitylamino)uracil with 3,4-dihydroxy-2-butanone 4-phosphate. This is the penultimate step in the biosynthesis of riboflavin. This Ruthia magnifica subsp. Calyptogena magnifica protein is 6,7-dimethyl-8-ribityllumazine synthase.